The following is a 346-amino-acid chain: Probable dolichyl-diphosphooligosaccharide--protein glycosyltransferase subunit 3B (346 aa).

Residues methionine 1 to alanine 22 form the signal peptide. Over alanine 23 to leucine 189 the chain is Lumenal. A glycan (N-linked (GlcNAc...) asparagine) is linked at asparagine 108. The helical transmembrane segment at leucine 190–isoleucine 210 threads the bilayer. The Cytoplasmic segment spans residues lysine 211 to leucine 225. Residues tryptophan 226–isoleucine 246 traverse the membrane as a helical segment. Over arginine 247–glycine 277 the chain is Lumenal. A helical transmembrane segment spans residues phenylalanine 278–leucine 298. Over valine 299–arginine 308 the chain is Cytoplasmic. Residues leucine 309 to aspartate 329 traverse the membrane as a helical segment. Residues asparagine 330–arginine 346 lie on the Lumenal side of the membrane.

The protein belongs to the OST3/OST6 family. As to quaternary structure, component of the oligosaccharyltransferase (OST) complex.

It localises to the endoplasmic reticulum membrane. Functionally, subunit of the oligosaccharyl transferase (OST) complex that catalyzes the initial transfer of a defined glycan (Glc(3)Man(9)GlcNAc(2) in eukaryotes) from the lipid carrier dolichol-pyrophosphate to an asparagine residue within an Asn-X-Ser/Thr consensus motif in nascent polypeptide chains, the first step in protein N-glycosylation. N-glycosylation occurs cotranslationally and the complex associates with the Sec61 complex at the channel-forming translocon complex that mediates protein translocation across the endoplasmic reticulum (ER). All subunits are required for a maximal enzyme activity. In Arabidopsis thaliana (Mouse-ear cress), this protein is Probable dolichyl-diphosphooligosaccharide--protein glycosyltransferase subunit 3B (OST3B).